The sequence spans 334 residues: uncharacterized protein (334 aa).

2 helical membrane passes run 1-21 (MFRL…FTFI) and 46-66 (ILGL…IIII).

The protein resides in the cell membrane. This is an uncharacterized protein from Rickettsia prowazekii (strain Madrid E).